Consider the following 226-residue polypeptide: ATP synthase F(0) complex subunit a (226 aa).

Helical transmembrane passes span 9-29, 68-88, 97-117, 138-158, and 184-204; these read FITP…FPSL, WTLM…LGLL, QLSM…ITGF, IPML…ALAV, and ISPT…ILEF.

It belongs to the ATPase A chain family. As to quaternary structure, component of the ATP synthase complex composed at least of ATP5F1A/subunit alpha, ATP5F1B/subunit beta, ATP5MC1/subunit c (homooctomer), MT-ATP6/subunit a, MT-ATP8/subunit 8, ATP5ME/subunit e, ATP5MF/subunit f, ATP5MG/subunit g, ATP5MK/subunit k, ATP5MJ/subunit j, ATP5F1C/subunit gamma, ATP5F1D/subunit delta, ATP5F1E/subunit epsilon, ATP5PF/subunit F6, ATP5PB/subunit b, ATP5PD/subunit d, ATP5PO/subunit OSCP. ATP synthase complex consists of a soluble F(1) head domain (subunits alpha(3) and beta(3)) - the catalytic core - and a membrane F(0) domain - the membrane proton channel (subunits c, a, 8, e, f, g, k and j). These two domains are linked by a central stalk (subunits gamma, delta, and epsilon) rotating inside the F1 region and a stationary peripheral stalk (subunits F6, b, d, and OSCP). Interacts with DNAJC30; interaction is direct.

It is found in the mitochondrion inner membrane. The catalysed reaction is H(+)(in) = H(+)(out). In terms of biological role, subunit a, of the mitochondrial membrane ATP synthase complex (F(1)F(0) ATP synthase or Complex V) that produces ATP from ADP in the presence of a proton gradient across the membrane which is generated by electron transport complexes of the respiratory chain. ATP synthase complex consist of a soluble F(1) head domain - the catalytic core - and a membrane F(1) domain - the membrane proton channel. These two domains are linked by a central stalk rotating inside the F(1) region and a stationary peripheral stalk. During catalysis, ATP synthesis in the catalytic domain of F(1) is coupled via a rotary mechanism of the central stalk subunits to proton translocation. With the subunit c (ATP5MC1), forms the proton-conducting channel in the F(0) domain, that contains two crucial half-channels (inlet and outlet) that facilitate proton movement from the mitochondrial intermembrane space (IMS) into the matrix. Protons are taken up via the inlet half-channel and released through the outlet half-channel, following a Grotthuss mechanism. The sequence is that of ATP synthase F(0) complex subunit a from Capra hircus (Goat).